The sequence spans 496 residues: Probable cytosol aminopeptidase (496 aa).

Residues K257 and D262 each coordinate Mn(2+). The active site involves K269. Residues D281, D341, and E343 each coordinate Mn(2+). R345 is a catalytic residue.

Belongs to the peptidase M17 family. The cofactor is Mn(2+).

The protein localises to the cytoplasm. It carries out the reaction Release of an N-terminal amino acid, Xaa-|-Yaa-, in which Xaa is preferably Leu, but may be other amino acids including Pro although not Arg or Lys, and Yaa may be Pro. Amino acid amides and methyl esters are also readily hydrolyzed, but rates on arylamides are exceedingly low.. It catalyses the reaction Release of an N-terminal amino acid, preferentially leucine, but not glutamic or aspartic acids.. Presumably involved in the processing and regular turnover of intracellular proteins. Catalyzes the removal of unsubstituted N-terminal amino acids from various peptides. The sequence is that of Probable cytosol aminopeptidase from Synechococcus sp. (strain CC9311).